The sequence spans 188 residues: NAD(P)H-quinone oxidoreductase subunit J (188 aa).

Polar residues predominate over residues 1–12 (MSETPSKQTAAS). A disordered region spans residues 1–23 (MSETPSKQTAASDETGAVVAPEP).

The protein belongs to the complex I 30 kDa subunit family. NDH-1 can be composed of about 15 different subunits; different subcomplexes with different compositions have been identified which probably have different functions.

Its subcellular location is the cellular thylakoid membrane. It carries out the reaction a plastoquinone + NADH + (n+1) H(+)(in) = a plastoquinol + NAD(+) + n H(+)(out). The catalysed reaction is a plastoquinone + NADPH + (n+1) H(+)(in) = a plastoquinol + NADP(+) + n H(+)(out). NDH-1 shuttles electrons from an unknown electron donor, via FMN and iron-sulfur (Fe-S) centers, to quinones in the respiratory and/or the photosynthetic chain. The immediate electron acceptor for the enzyme in this species is believed to be plastoquinone. Couples the redox reaction to proton translocation, and thus conserves the redox energy in a proton gradient. Cyanobacterial NDH-1 also plays a role in inorganic carbon-concentration. The chain is NAD(P)H-quinone oxidoreductase subunit J from Synechococcus sp. (strain CC9605).